We begin with the raw amino-acid sequence, 434 residues long: Serine--tRNA ligase (434 aa).

L-serine is bound at residue 237–239 (TAE). 268–270 (RAE) lines the ATP pocket. Glu291 contributes to the L-serine binding site. Residue 358 to 361 (EISS) participates in ATP binding. Ser393 contacts L-serine.

The protein belongs to the class-II aminoacyl-tRNA synthetase family. Type-1 seryl-tRNA synthetase subfamily. Homodimer. The tRNA molecule binds across the dimer.

It is found in the cytoplasm. The catalysed reaction is tRNA(Ser) + L-serine + ATP = L-seryl-tRNA(Ser) + AMP + diphosphate + H(+). The enzyme catalyses tRNA(Sec) + L-serine + ATP = L-seryl-tRNA(Sec) + AMP + diphosphate + H(+). It participates in aminoacyl-tRNA biosynthesis; selenocysteinyl-tRNA(Sec) biosynthesis; L-seryl-tRNA(Sec) from L-serine and tRNA(Sec): step 1/1. Its function is as follows. Catalyzes the attachment of serine to tRNA(Ser). Is also able to aminoacylate tRNA(Sec) with serine, to form the misacylated tRNA L-seryl-tRNA(Sec), which will be further converted into selenocysteinyl-tRNA(Sec). This is Serine--tRNA ligase from Rhodopseudomonas palustris (strain BisB5).